The sequence spans 137 residues: Phospholipase A2 group V (137 aa).

The first 20 residues, 1 to 20, serve as a signal peptide directing secretion; that stretch reads MKRLLTLAWFLACSVPAVPG. 6 cysteine pairs are disulfide-bonded: cysteine 46-cysteine 137, cysteine 48-cysteine 64, cysteine 63-cysteine 117, cysteine 70-cysteine 110, cysteine 79-cysteine 103, and cysteine 97-cysteine 108. Tyrosine 47, glycine 49, and glycine 51 together coordinate Ca(2+). Histidine 67 is an active-site residue. Aspartate 68 contributes to the Ca(2+) binding site. The active site involves aspartate 111.

Belongs to the phospholipase A2 family. It depends on Ca(2+) as a cofactor. Post-translationally, this enzyme lacks one of the seven disulfide bonds found in similar PA2 proteins.

Its subcellular location is the secreted. It localises to the cell membrane. It is found in the cytoplasmic vesicle. The protein resides in the phagosome. The protein localises to the recycling endosome. Its subcellular location is the golgi apparatus. It localises to the cis-Golgi network. It is found in the trans-Golgi network. The enzyme catalyses a 1,2-diacyl-sn-glycero-3-phosphocholine + H2O = a 1-acyl-sn-glycero-3-phosphocholine + a fatty acid + H(+). It carries out the reaction 1-hexadecanoyl-2-(9Z-octadecenoyl)-sn-glycero-3-phosphocholine + H2O = 1-hexadecanoyl-sn-glycero-3-phosphocholine + (9Z)-octadecenoate + H(+). It catalyses the reaction 1-hexadecanoyl-2-(5Z,8Z,11Z,14Z-eicosatetraenoyl)-sn-glycero-3-phosphocholine + H2O = 1-hexadecanoyl-sn-glycero-3-phosphocholine + (5Z,8Z,11Z,14Z)-eicosatetraenoate + H(+). The catalysed reaction is 1-hexadecanoyl-2-(9Z,12Z-octadecadienoyl)-sn-glycero-3-phosphoethanolamine + H2O = 1-hexadecanoyl-sn-glycero-3-phosphoethanolamine + (9Z,12Z)-octadecadienoate + H(+). The enzyme catalyses 1-hexadecanoyl-2-(5Z,8Z,11Z,14Z-eicosatetraenoyl)-sn-glycero-3-phosphoethanolamine + H2O = 1-hexadecanoyl-sn-glycero-3-phosphoethanolamine + (5Z,8Z,11Z,14Z)-eicosatetraenoate + H(+). It carries out the reaction 1-octadecanoyl-2-(5Z,8Z,11Z,14Z-eicosatetraenoyl)-sn-glycero-3-phospho-(1D-myo-inositol) + H2O = 1-octadecanoyl-sn-glycero-3-phospho-(1D-myo-inositol) + (5Z,8Z,11Z,14Z)-eicosatetraenoate + H(+). It catalyses the reaction 1-hexadecanoyl-2-(9Z-octadecenoyl)-sn-glycero-3-phosphoglycerol + H2O = 1-hexadecanoyl-sn-glycero-3-phosphoglycerol + (9Z)-octadecenoate + H(+). The catalysed reaction is N-hexadecanoyl-1,2-di-(9Z-octadecenoyl)-sn-glycero-3-phosphoethanolamine + H2O = N-hexadecanoyl-1-(9Z-octadecenoyl)-sn-glycero-3-phosphoethanolamine + (9Z)-octadecenoate + H(+). The enzyme catalyses 1'-[1,2-di-(9Z-octadecenoyl)-sn-glycero-3-phospho]-3'-[1-(9Z-octadecenoyl)-sn-glycero-3-phospho]-glycerol + H2O = 1',3'-bis-[1-(9Z-octadecenoyl)-sn-glycero-3-phospho]-glycerol + (9Z)-octadecenoate + H(+). It carries out the reaction 1',3'-bis[1,2-di-(9Z-octadecenoyl)-sn-glycero-3-phospho]-glycerol + H2O = 1'-[1,2-di-(9Z-octadecenoyl)-sn-glycero-3-phospho]-3'-[1-(9Z-octadecenoyl)-sn-glycero-3-phospho]-glycerol + (9Z)-octadecenoate + H(+). Its pathway is lipid metabolism; phospholipid metabolism. The protein operates within lipid metabolism; leukotriene B4 biosynthesis. It functions in the pathway lipid metabolism; leukotriene C4 biosynthesis. Its function is as follows. Secretory calcium-dependent phospholipase A2 that primarily targets extracellular phospholipids. Hydrolyzes the ester bond of the fatty acyl group attached at sn-2 position of phospholipids (phospholipase A2 activity), preferentially releasing fatty acyl groups with a low degree of unsaturation such as oleoyl (C18:1) and linoleoyl (C18:2) groups. Hydrolyzes low-density lipoprotein (LDL) phospholipids releasing unsaturated fatty acids that drive macrophage polarization toward an M2 phenotype. May act in an autocrine and paracrine manner. Contributes to lipid remodeling of cellular membranes at different subcellular locations and generation of lipid mediators involved in pathogen clearance. Cleaves sn-2 fatty acyl chains of cardiolipin, a major component of the inner membrane of mitochondria and bacterial membranes. Promotes phagocytosis of bacteria in macrophages through production of lysophosphatidylethanolamines. Displays bactericidal activity against Gram-positive bacteria by directly hydrolyzing phospholipids of the bacterial membrane. Promotes phagocytosis and killing of ingested fungi likely through controlling phagosome-lysosome fusion and phagosome maturation. Plays a role in biosynthesis of cysteinyl leukotrienes (CysLTs) in myeloid cells. In eosinophils, triggers perinuclear arachidonate release and LTC4 synthesis in a PLA2G4A-independent way. In neutrophils, amplifies CysLTs biosynthesis initiated by PLA2G4A. Promotes immune complex clearance in macrophages via stimulating synthesis of CysLTs, which act through CYSLTR1 to trigger phagocytosis. May regulate antigen processing in antigen-presenting cells. In pulmonary macrophages regulates IL33 production required for activation of group 2 innate lymphoid cells. May play a role in the biosynthesis of N-acyl ethanolamines that regulate energy metabolism. Hydrolyzes N-acyl phosphatidylethanolamines to N-acyl lysophosphatidylethanolamines, which are further cleaved by a lysophospholipase D to release N-acyl ethanolamines. The sequence is that of Phospholipase A2 group V (Pla2g5) from Rattus norvegicus (Rat).